Consider the following 355-residue polypeptide: DNA polymerase IV (355 aa).

The 182-residue stretch at I7–G188 folds into the UmuC domain. Mg(2+)-binding residues include D11 and D106. The active site involves E107.

Belongs to the DNA polymerase type-Y family. As to quaternary structure, monomer. The cofactor is Mg(2+).

It is found in the cytoplasm. It carries out the reaction DNA(n) + a 2'-deoxyribonucleoside 5'-triphosphate = DNA(n+1) + diphosphate. Functionally, poorly processive, error-prone DNA polymerase involved in untargeted mutagenesis. Copies undamaged DNA at stalled replication forks, which arise in vivo from mismatched or misaligned primer ends. These misaligned primers can be extended by PolIV. Exhibits no 3'-5' exonuclease (proofreading) activity. May be involved in translesional synthesis, in conjunction with the beta clamp from PolIII. This chain is DNA polymerase IV, found in Legionella pneumophila (strain Paris).